A 133-amino-acid chain; its full sequence is Small ribosomal subunit protein uS8 (133 aa).

Belongs to the universal ribosomal protein uS8 family. As to quaternary structure, part of the 30S ribosomal subunit. Contacts proteins S5 and S12.

In terms of biological role, one of the primary rRNA binding proteins, it binds directly to 16S rRNA central domain where it helps coordinate assembly of the platform of the 30S subunit. This is Small ribosomal subunit protein uS8 from Crocosphaera subtropica (strain ATCC 51142 / BH68) (Cyanothece sp. (strain ATCC 51142)).